A 398-amino-acid polypeptide reads, in one-letter code: MTNSPRTAAIIVAAGRGLRAGAGGPKQYRSLAGRPVIARAMEPFCTHPGVMAVQPVTNPDDTEMFNAAVAGLNFRPAVGGGATRQASVRAGLEALAELKPDIVLIHDAARCFVTPELISRAITAAGATGAALPVVPVTDTIKQVDSSGAVDATPDRASLRIAQTPQAFRFDVILDAHRRAASGGRDDFTDDAAIAEWAGLTVSTFEGDANNMKMTTPEDFAREESRLMAALGDIRTGTGYDVHAFGEGDHVWLCGLKVPHTRGFLAHSDGDVGLHALVDAILGALADGDIGSHFPPTDPQWKGAASDKFLKYAIDRVTARGGRVANLEVTMICERPKIGPLRDAMRQRIAEITGVPVSRVAVKATTSEKLGFTGREEGIAATASATIRLPWGADGLAG.

Positions 1 to 234 (MTNSPRTAAI…SRLMAALGDI (234 aa)) are 2-C-methyl-D-erythritol 4-phosphate cytidylyltransferase. The segment at 235-398 (RTGTGYDVHA…LPWGADGLAG (164 aa)) is 2-C-methyl-D-erythritol 2,4-cyclodiphosphate synthase. A divalent metal cation is bound by residues Asp241 and His243. Residues 241–243 (DVH) and 267–268 (HS) contribute to the 4-CDP-2-C-methyl-D-erythritol 2-phosphate site. A divalent metal cation is bound at residue His275. 4-CDP-2-C-methyl-D-erythritol 2-phosphate contacts are provided by residues 289-291 (DIG), 365-368 (TTSE), Phe372, and Arg375.

It in the N-terminal section; belongs to the IspD/TarI cytidylyltransferase family. IspD subfamily. The protein in the C-terminal section; belongs to the IspF family. A divalent metal cation serves as cofactor.

The catalysed reaction is 2-C-methyl-D-erythritol 4-phosphate + CTP + H(+) = 4-CDP-2-C-methyl-D-erythritol + diphosphate. It carries out the reaction 4-CDP-2-C-methyl-D-erythritol 2-phosphate = 2-C-methyl-D-erythritol 2,4-cyclic diphosphate + CMP. Its pathway is isoprenoid biosynthesis; isopentenyl diphosphate biosynthesis via DXP pathway; isopentenyl diphosphate from 1-deoxy-D-xylulose 5-phosphate: step 2/6. It functions in the pathway isoprenoid biosynthesis; isopentenyl diphosphate biosynthesis via DXP pathway; isopentenyl diphosphate from 1-deoxy-D-xylulose 5-phosphate: step 4/6. Bifunctional enzyme that catalyzes the formation of 4-diphosphocytidyl-2-C-methyl-D-erythritol from CTP and 2-C-methyl-D-erythritol 4-phosphate (MEP) (IspD), and catalyzes the conversion of 4-diphosphocytidyl-2-C-methyl-D-erythritol 2-phosphate (CDP-ME2P) to 2-C-methyl-D-erythritol 2,4-cyclodiphosphate (ME-CPP) with a corresponding release of cytidine 5-monophosphate (CMP) (IspF). The sequence is that of Bifunctional enzyme IspD/IspF from Rhodopseudomonas palustris (strain ATCC BAA-98 / CGA009).